The sequence spans 338 residues: Flap endonuclease 1 (338 aa).

The tract at residues 1–98 is N-domain; the sequence is MGTDIGDLLL…DTLAKRHEVR (98 aa). Mg(2+)-binding residues include aspartate 27, aspartate 80, glutamate 152, glutamate 154, aspartate 173, aspartate 175, and aspartate 236. The tract at residues 116-257 is I-domain; the sequence is EAYKYAQASS…RALKLVKEHG (142 aa). An interaction with PCNA region spans residues 330–338; the sequence is SQSTLDQWF.

It belongs to the XPG/RAD2 endonuclease family. FEN1 subfamily. Interacts with PCNA. PCNA stimulates the nuclease activity without altering cleavage specificity. Requires Mg(2+) as cofactor.

Structure-specific nuclease with 5'-flap endonuclease and 5'-3' exonuclease activities involved in DNA replication and repair. During DNA replication, cleaves the 5'-overhanging flap structure that is generated by displacement synthesis when DNA polymerase encounters the 5'-end of a downstream Okazaki fragment. Binds the unpaired 3'-DNA end and kinks the DNA to facilitate 5' cleavage specificity. Cleaves one nucleotide into the double-stranded DNA from the junction in flap DNA, leaving a nick for ligation. Also involved in the base excision repair (BER) pathway. Acts as a genome stabilization factor that prevents flaps from equilibrating into structures that lead to duplications and deletions. Also possesses 5'-3' exonuclease activity on nicked or gapped double-stranded DNA. The protein is Flap endonuclease 1 of Methanococcoides burtonii (strain DSM 6242 / NBRC 107633 / OCM 468 / ACE-M).